Reading from the N-terminus, the 601-residue chain is Elongation factor 4 (601 aa).

The 183-residue stretch at 4 to 186 (SFIRNFAIIA…SIVHLVPPPK (183 aa)) folds into the tr-type G domain. GTP is bound by residues 16–21 (DHGKST) and 133–136 (NKID).

This sequence belongs to the TRAFAC class translation factor GTPase superfamily. Classic translation factor GTPase family. LepA subfamily.

It is found in the cell inner membrane. The catalysed reaction is GTP + H2O = GDP + phosphate + H(+). Functionally, required for accurate and efficient protein synthesis under certain stress conditions. May act as a fidelity factor of the translation reaction, by catalyzing a one-codon backward translocation of tRNAs on improperly translocated ribosomes. Back-translocation proceeds from a post-translocation (POST) complex to a pre-translocation (PRE) complex, thus giving elongation factor G a second chance to translocate the tRNAs correctly. Binds to ribosomes in a GTP-dependent manner. The sequence is that of Elongation factor 4 from Koribacter versatilis (strain Ellin345).